The following is a 292-amino-acid chain: uncharacterized protein (292 aa).

Disordered regions lie at residues 29-50 (SEKPVGAPPASQIPGLSDLRDS) and 166-292 (VKRK…EELK). Ser-50 is modified (phosphoserine). 2 stretches are compositionally biased toward polar residues: residues 176–189 (NSKNSSKAGTPVNN) and 208–217 (GSPTNFSKLI). The segment covering 221-239 (YKDEWLQQQKADSDRRTPK) has biased composition (basic and acidic residues). Composition is skewed to polar residues over residues 240–250 (TSEASVSTQST) and 260–270 (DTETPQNSETP).

In terms of processing, phosphorylated upon DNA damage.

This is an uncharacterized protein from Rattus norvegicus (Rat).